The chain runs to 207 residues: Large ribosomal subunit protein uL4 (207 aa).

The disordered stretch occupies residues 50 to 76 (KTKTVSEVSGTTKKPFKQKGTGNARQG).

It belongs to the universal ribosomal protein uL4 family. In terms of assembly, part of the 50S ribosomal subunit.

One of the primary rRNA binding proteins, this protein initially binds near the 5'-end of the 23S rRNA. It is important during the early stages of 50S assembly. It makes multiple contacts with different domains of the 23S rRNA in the assembled 50S subunit and ribosome. In terms of biological role, forms part of the polypeptide exit tunnel. The sequence is that of Large ribosomal subunit protein uL4 from Rickettsia typhi (strain ATCC VR-144 / Wilmington).